The sequence spans 121 residues: Large ribosomal subunit protein uL14 (121 aa).

Belongs to the universal ribosomal protein uL14 family. Part of the 50S ribosomal subunit. Forms a cluster with proteins L3 and L19. In the 70S ribosome, L14 and L19 interact and together make contacts with the 16S rRNA in bridges B5 and B8.

Binds to 23S rRNA. Forms part of two intersubunit bridges in the 70S ribosome. This Synechococcus sp. (strain CC9311) protein is Large ribosomal subunit protein uL14.